We begin with the raw amino-acid sequence, 152 residues long: Biogenesis of lysosome-related organelles complex 1 subunit 1 (152 aa).

Belongs to the BLOC1S1 family. Component of the biogenesis of lysosome-related organelles complex-1 (BLOC-1). Interacts with BLOS2 and SNX1. As to expression, expressed in the whole plant (at protein level).

The protein resides in the cytoplasm. Its subcellular location is the endosome. Functionally, component of the biogenesis of lysosome-related organelles complex-1 (BLOC-1), a complex that mediates the vacuolar degradative transport via the intracellular vesicle trafficking from the endosome to the vacuole. Probably regulates the PIN1 and PIN2 homeostasis through its interaction with SNX1. This chain is Biogenesis of lysosome-related organelles complex 1 subunit 1 (BLOS1), found in Arabidopsis thaliana (Mouse-ear cress).